A 515-amino-acid polypeptide reads, in one-letter code: 2,3-bisphosphoglycerate-independent phosphoglycerate mutase (515 aa).

Mn(2+)-binding residues include Asp-14 and Ser-63. Ser-63 is an active-site residue. Substrate contacts are provided by residues His-124, 154 to 155 (RD), Arg-186, Arg-192, 259 to 262 (RADR), and Lys-334. Residues Asp-401, His-405, Asp-442, His-443, and His-460 each coordinate Mn(2+).

Belongs to the BPG-independent phosphoglycerate mutase family. It depends on Mg(2+) as a cofactor. Mn(2+) serves as cofactor.

It catalyses the reaction (2R)-2-phosphoglycerate = (2R)-3-phosphoglycerate. The protein operates within carbohydrate degradation; glycolysis; pyruvate from D-glyceraldehyde 3-phosphate: step 3/5. Activity is not affected by 2,3-bisphosphoglycerate. Its function is as follows. Catalyzes the interconversion of 2-phosphoglycerate and 3-phosphoglycerate. The sequence is that of 2,3-bisphosphoglycerate-independent phosphoglycerate mutase from Brugia malayi (Filarial nematode worm).